A 105-amino-acid polypeptide reads, in one-letter code: Secreted RxLR effector protein 158 (105 aa).

Positions 1–22 are cleaved as a signal peptide; sequence MRGAHYVAIVLLVAAGGQTAAG. A RxLR-dEER motif is present at residues 50–71; that stretch reads RALQASRNPKDDLMFSAGDEER.

The protein belongs to the RxLR effector family.

It localises to the secreted. It is found in the host nucleus. The protein localises to the host cytoplasm. Functionally, secreted effector that partially suppresses the host cell death induced by cell death-inducing proteins. This is Secreted RxLR effector protein 158 from Plasmopara viticola (Downy mildew of grapevine).